A 359-amino-acid chain; its full sequence is Tropomodulin-1 (359 aa).

The interval 39 to 61 (PDNALLPAGLRQKDQTTKAPTGP) is disordered. The tract at residues 39–138 (PDNALLPAGL…CDIAAILGMH (100 aa)) is tropomyosin-binding.

This sequence belongs to the tropomodulin family. In terms of assembly, binds to the N-terminus of tropomyosin and to actin. Interacts with FLII.

It is found in the cytoplasm. The protein localises to the cytoskeleton. Functionally, blocks the elongation and depolymerization of the actin filaments at the pointed end. The Tmod/TM complex contributes to the formation of the short actin protofilament, which in turn defines the geometry of the membrane skeleton. May play an important role in regulating the organization of actin filaments by preferentially binding to a specific tropomyosin isoform at its N-terminus. In Bos taurus (Bovine), this protein is Tropomodulin-1 (TMOD1).